The sequence spans 372 residues: Invasion protein InvE (372 aa).

The span at 1-19 shows a compositional bias: polar residues; that stretch reads MIPGSTSGISFSRILSRQT. The disordered stretch occupies residues 1 to 46; that stretch reads MIPGSTSGISFSRILSRQTSHQDATQHTDAQQAEIQQAAEDSSPGA. Positions 21 to 40 are enriched in low complexity; sequence HQDATQHTDAQQAEIQQAAE.

It is found in the cell membrane. In terms of biological role, involved in the triggering of intracellular events that lead to microbial internalization. These events include increase in calcium level, redistribution of actin microfilaments, and changes in the normal structure of the microvilli. Encoded within the type III secretion system (SPI-1 T3SS), it is essential for the translocation of protein effectors into host cells. Forms a complex with SipB and SipC in the presence of their chaperone SicA. Positively regulates the secretion of SPI-1 T3SS effector proteins SipB, SipC and SipD and negatively influences the secretion of SipA, SopA and SptP. This is Invasion protein InvE (invE) from Salmonella typhimurium (strain LT2 / SGSC1412 / ATCC 700720).